The following is a 328-amino-acid chain: Formyltetrahydrofolate deformylase 2, mitochondrial (328 aa).

A mitochondrion-targeting transit peptide spans 1 to 12 (MIRRVSTTSCLS). In terms of domain architecture, ACT spans 46 to 129 (FHVFHCPDVV…SVVRVPSLDP (84 aa)). Aspartate 272 is a catalytic residue.

Belongs to the PurU family. Expressed in leaves, cotyledons, roots, seeds and flowers.

Its subcellular location is the mitochondrion. The catalysed reaction is (6R)-10-formyltetrahydrofolate + H2O = (6S)-5,6,7,8-tetrahydrofolate + formate + H(+). Functionally, deformylase involved in photorespiration. Prevents excessive accumulation of 5-formyl tetrahydrofolate (THF), a potent inhibitor of the Gly decarboxylase/Ser hydroxymethyltransferase complex. The protein is Formyltetrahydrofolate deformylase 2, mitochondrial (PURU2) of Arabidopsis thaliana (Mouse-ear cress).